The primary structure comprises 297 residues: Homoserine kinase (297 aa).

84–94 provides a ligand contact to ATP; sequence PPARGLGSSAT.

This sequence belongs to the GHMP kinase family. Homoserine kinase subfamily.

It is found in the cytoplasm. The enzyme catalyses L-homoserine + ATP = O-phospho-L-homoserine + ADP + H(+). It functions in the pathway amino-acid biosynthesis; L-threonine biosynthesis; L-threonine from L-aspartate: step 4/5. Functionally, catalyzes the ATP-dependent phosphorylation of L-homoserine to L-homoserine phosphate. In Aquifex aeolicus (strain VF5), this protein is Homoserine kinase (thrB).